A 1342-amino-acid chain; its full sequence is DNA-directed RNA polymerase subunit beta (1342 aa).

It belongs to the RNA polymerase beta chain family. In terms of assembly, the RNAP catalytic core consists of 2 alpha, 1 beta, 1 beta' and 1 omega subunit. When a sigma factor is associated with the core the holoenzyme is formed, which can initiate transcription.

It catalyses the reaction RNA(n) + a ribonucleoside 5'-triphosphate = RNA(n+1) + diphosphate. Its function is as follows. DNA-dependent RNA polymerase catalyzes the transcription of DNA into RNA using the four ribonucleoside triphosphates as substrates. The protein is DNA-directed RNA polymerase subunit beta of Blochmanniella floridana.